The sequence spans 338 residues: Glycerol-3-phosphate dehydrogenase [NAD(P)+] (338 aa).

3 residues coordinate NADPH: Ser-13, Trp-14, and Lys-108. Sn-glycerol 3-phosphate contacts are provided by Lys-108, Gly-139, and Ser-141. Residue Ala-143 coordinates NADPH. Sn-glycerol 3-phosphate-binding residues include Lys-194, Asp-247, Ser-257, Arg-258, and Asn-259. The Proton acceptor role is filled by Lys-194. Residue Arg-258 coordinates NADPH. 2 residues coordinate NADPH: Val-282 and Glu-284.

The protein belongs to the NAD-dependent glycerol-3-phosphate dehydrogenase family.

The protein localises to the cytoplasm. The enzyme catalyses sn-glycerol 3-phosphate + NAD(+) = dihydroxyacetone phosphate + NADH + H(+). It catalyses the reaction sn-glycerol 3-phosphate + NADP(+) = dihydroxyacetone phosphate + NADPH + H(+). The protein operates within membrane lipid metabolism; glycerophospholipid metabolism. Catalyzes the reduction of the glycolytic intermediate dihydroxyacetone phosphate (DHAP) to sn-glycerol 3-phosphate (G3P), the key precursor for phospholipid synthesis. The sequence is that of Glycerol-3-phosphate dehydrogenase [NAD(P)+] from Streptococcus pneumoniae (strain P1031).